A 159-amino-acid chain; its full sequence is Cytochrome c-type biogenesis protein CcmE (159 aa).

Topologically, residues 1 to 8 (MNPRRKTR) are cytoplasmic. A helical; Signal-anchor for type II membrane protein transmembrane segment spans residues 9-29 (LWVALTVLAGLGLTMALVLYA). The Periplasmic segment spans residues 30-159 (LRANIDLFYT…PPQAYKDNRP (130 aa)). Heme-binding residues include His-130 and Tyr-134. The disordered stretch occupies residues 130 to 159 (HDENYTPPEVKAAMDANHTRPPQAYKDNRP).

It belongs to the CcmE/CycJ family.

The protein localises to the cell inner membrane. Functionally, heme chaperone required for the biogenesis of c-type cytochromes. Transiently binds heme delivered by CcmC and transfers the heme to apo-cytochromes in a process facilitated by CcmF and CcmH. This Cronobacter sakazakii (strain ATCC BAA-894) (Enterobacter sakazakii) protein is Cytochrome c-type biogenesis protein CcmE.